We begin with the raw amino-acid sequence, 256 residues long: Enolase-phosphatase E1 (256 aa).

Asp-14 and Glu-16 together coordinate Mg(2+). Residues 142 to 143 (SS) and Lys-176 each bind substrate. Asp-201 contributes to the Mg(2+) binding site.

This sequence belongs to the HAD-like hydrolase superfamily. MasA/MtnC family. As to quaternary structure, monomer. The cofactor is Mg(2+).

It localises to the cytoplasm. Its subcellular location is the nucleus. The enzyme catalyses 5-methylsulfanyl-2,3-dioxopentyl phosphate + H2O = 1,2-dihydroxy-5-(methylsulfanyl)pent-1-en-3-one + phosphate. Its pathway is amino-acid biosynthesis; L-methionine biosynthesis via salvage pathway; L-methionine from S-methyl-5-thio-alpha-D-ribose 1-phosphate: step 3/6. The protein operates within amino-acid biosynthesis; L-methionine biosynthesis via salvage pathway; L-methionine from S-methyl-5-thio-alpha-D-ribose 1-phosphate: step 4/6. Its function is as follows. Bifunctional enzyme that catalyzes the enolization of 2,3-diketo-5-methylthiopentyl-1-phosphate (DK-MTP-1-P) into the intermediate 2-hydroxy-3-keto-5-methylthiopentenyl-1-phosphate (HK-MTPenyl-1-P), which is then dephosphorylated to form the acireductone 1,2-dihydroxy-3-keto-5-methylthiopentene (DHK-MTPene). The polypeptide is Enolase-phosphatase E1 (Drosophila sechellia (Fruit fly)).